Here is a 1076-residue protein sequence, read N- to C-terminus: DNA-directed RNA polymerase subunit beta (1076 aa).

It belongs to the RNA polymerase beta chain family. In plastids the minimal PEP RNA polymerase catalytic core is composed of four subunits: alpha, beta, beta', and beta''. When a (nuclear-encoded) sigma factor is associated with the core the holoenzyme is formed, which can initiate transcription.

The protein localises to the plastid. It is found in the chloroplast. It catalyses the reaction RNA(n) + a ribonucleoside 5'-triphosphate = RNA(n+1) + diphosphate. In terms of biological role, DNA-dependent RNA polymerase catalyzes the transcription of DNA into RNA using the four ribonucleoside triphosphates as substrates. In Triticum aestivum (Wheat), this protein is DNA-directed RNA polymerase subunit beta.